A 98-amino-acid polypeptide reads, in one-letter code: Homeobox protein SMOX-4 (98 aa).

A DNA-binding region (homeobox) is located at residues 37–96; it reads SFRNRTAFTDYQLICLEREFSHIQYLSRIDRIHLAQNLNLTEKQVKIWFQNRRVRWRKRN.

Its subcellular location is the nucleus. This Schistosoma mansoni (Blood fluke) protein is Homeobox protein SMOX-4 (SMOX-4).